A 530-amino-acid chain; its full sequence is Hyccin 2 (530 aa).

A phosphothreonine mark is found at Thr-30 and Thr-306. Ser-321 and Ser-341 each carry phosphoserine. A disordered region spans residues 328-410 (RREGAEGVNG…DSVVRKQYVQ (83 aa)). The segment covering 353–373 (SGASLSSQPIGTKPSSSSQRG) has biased composition (polar residues). Phosphoserine occurs at positions 430, 442, 444, and 491. The interval 498-530 (GQAGEGKELLSPGAPLTKQSRSPSFNMQLISQV) is disordered. A compositionally biased stretch (polar residues) spans 514–530 (TKQSRSPSFNMQLISQV).

Belongs to the Hyccin family. As to quaternary structure, component of a phosphatidylinositol 4-kinase (PI4K) complex, composed of PI4KA, EFR3 (EFR3A or EFR3B), TTC7 (TTC7A or TTC7B) and HYCC (HYCC1 or HYCC2).

The protein localises to the cytoplasm. Its subcellular location is the cytosol. It is found in the cell membrane. Functionally, component of a complex required to localize phosphatidylinositol 4-kinase (PI4K) to the plasma membrane. This chain is Hyccin 2 (HYCC2), found in Pongo abelii (Sumatran orangutan).